A 693-amino-acid polypeptide reads, in one-letter code: ATP-dependent DNA helicase RecG (693 aa).

The segment at 48 to 146 (THLYPIGELL…GDLSTPELQE (99 aa)) is wedge domain. The Helicase ATP-binding domain occupies 283–448 (DMALDVPMMR…AYADLDTSVI (166 aa)). Residue 296–303 (GDVGSGKT) participates in ATP binding. Residues 397–400 (DEQH) carry the DEAH box motif. A Helicase C-terminal domain is found at 482 to 628 (EGRQAYWVCT…GFVIAQKDLE (147 aa)).

This sequence belongs to the helicase family. RecG subfamily. In terms of assembly, monomer.

The enzyme catalyses Couples ATP hydrolysis with the unwinding of duplex DNA by translocating in the 3'-5' direction.. The catalysed reaction is ATP + H2O = ADP + phosphate + H(+). Functionally, plays a critical role in recombination and DNA repair. Helps process Holliday junction intermediates to mature products by catalyzing branch migration. Has replication fork regression activity, unwinds stalled or blocked replication forks to make a HJ that can be resolved. Has a DNA unwinding activity characteristic of a DNA helicase with 3'-5' polarity. In terms of biological role, plays a role in recovery after DNA ADP-ribosylation. This Escherichia coli O127:H6 (strain E2348/69 / EPEC) protein is ATP-dependent DNA helicase RecG.